A 1343-amino-acid polypeptide reads, in one-letter code: DNA-directed RNA polymerase subunit beta (1343 aa).

It belongs to the RNA polymerase beta chain family. In terms of assembly, the RNAP catalytic core consists of 2 alpha, 1 beta, 1 beta' and 1 omega subunit. When a sigma factor is associated with the core the holoenzyme is formed, which can initiate transcription.

It catalyses the reaction RNA(n) + a ribonucleoside 5'-triphosphate = RNA(n+1) + diphosphate. Its function is as follows. DNA-dependent RNA polymerase catalyzes the transcription of DNA into RNA using the four ribonucleoside triphosphates as substrates. The polypeptide is DNA-directed RNA polymerase subunit beta (Shewanella baltica (strain OS223)).